Here is a 166-residue protein sequence, read N- to C-terminus: MEAAQDHGPGLCCKPGGRLDMSHGFVHHIRRNQLDRDDYDKKVKQAAKEKARRRHTPAPTRPRKPDLQVYLPRHRDGSTHPVNPDCEEASESSSSGSSELEPPGRQLFCLDYEADSGEVTSVIVYQDDDPGRVSEAVSAHTPLDPAMREALRSRIQEELAKRQSRH.

Over residues 32 to 49 (NQLDRDDYDKKVKQAAKE) the composition is skewed to basic and acidic residues. The disordered stretch occupies residues 32–107 (NQLDRDDYDK…SELEPPGRQL (76 aa)). The span at 91–101 (ESSSSGSSELE) shows a compositional bias: low complexity.

Belongs to the UPF0561 family.

The chain is UPF0561 protein C2orf68 homolog from Mus musculus (Mouse).